The primary structure comprises 306 residues: tRNA (guanine-N(7)-)-methyltransferase (306 aa).

Residues 1–19 (MSSTAPLDSKATEQITTAA) are compositionally biased toward polar residues. The disordered stretch occupies residues 1–65 (MSSTAPLDSK…EASPELPSDE (65 aa)). S-adenosyl-L-methionine contacts are provided by residues Gly121, 144–145 (EI), 180–181 (NA), and Cys200. The active site involves Asp203. 278–280 (TEE) serves as a coordination point for S-adenosyl-L-methionine.

This sequence belongs to the class I-like SAM-binding methyltransferase superfamily. TrmB family. As to quaternary structure, forms a complex with TRM82.

The protein resides in the nucleus. It catalyses the reaction guanosine(46) in tRNA + S-adenosyl-L-methionine = N(7)-methylguanosine(46) in tRNA + S-adenosyl-L-homocysteine. Its pathway is tRNA modification; N(7)-methylguanine-tRNA biosynthesis. Functionally, catalyzes the formation of N(7)-methylguanine at position 46 (m7G46) in tRNA. The chain is tRNA (guanine-N(7)-)-methyltransferase from Lodderomyces elongisporus (strain ATCC 11503 / CBS 2605 / JCM 1781 / NBRC 1676 / NRRL YB-4239) (Yeast).